Here is a 718-residue protein sequence, read N- to C-terminus: Polyribonucleotide nucleotidyltransferase (718 aa).

Mg(2+)-binding residues include D506 and D512. The region spanning 572–632 is the KH domain; the sequence is PKLELFSVDP…EQIKAAKDYI (61 aa). One can recognise an S1 motif domain in the interval 657–718; it reads GQEFQGIVKK…NGKISVDLCE (62 aa).

This sequence belongs to the polyribonucleotide nucleotidyltransferase family. Mg(2+) serves as cofactor.

It localises to the cytoplasm. It catalyses the reaction RNA(n+1) + phosphate = RNA(n) + a ribonucleoside 5'-diphosphate. Its function is as follows. Involved in mRNA degradation. Catalyzes the phosphorolysis of single-stranded polyribonucleotides processively in the 3'- to 5'-direction. The polypeptide is Polyribonucleotide nucleotidyltransferase (Campylobacter jejuni subsp. doylei (strain ATCC BAA-1458 / RM4099 / 269.97)).